Here is a 66-residue protein sequence, read N- to C-terminus: Ocellatin-PT3 (66 aa).

A signal peptide spans methionine 1 to cysteine 22. Positions aspartate 23 to glutamate 39 are excised as a propeptide. Valine 66 is subject to Valine amide.

Expressed by the skin glands.

The protein localises to the secreted. Has antibacterial activity against Gram-negative bacterium E.coli ATCC 25922 (MIC=320 uM) but not against S.pneumoniae ATCC 700603, S.choleraesuis ATCC 14028 or Gram-positive bacterium S.aureus ATCC 29313. Shows no hemolytic activity and no cytotoxicity. The sequence is that of Ocellatin-PT3 from Leptodactylus pustulatus (Ceara white-lipped frog).